We begin with the raw amino-acid sequence, 176 residues long: NAD(P)H-quinone oxidoreductase subunit 6, chloroplastic (176 aa).

Helical transmembrane passes span 10-30 (FILV…VFFT), 32-52 (TIFS…FYIL), 63-83 (LLIY…FMNG), 92-112 (VWTV…ISQI), and 152-172 (FFLP…GAIF).

The protein belongs to the complex I subunit 6 family. In terms of assembly, NDH is composed of at least 16 different subunits, 5 of which are encoded in the nucleus.

The protein resides in the plastid. It localises to the chloroplast thylakoid membrane. It catalyses the reaction a plastoquinone + NADH + (n+1) H(+)(in) = a plastoquinol + NAD(+) + n H(+)(out). The enzyme catalyses a plastoquinone + NADPH + (n+1) H(+)(in) = a plastoquinol + NADP(+) + n H(+)(out). Functionally, NDH shuttles electrons from NAD(P)H:plastoquinone, via FMN and iron-sulfur (Fe-S) centers, to quinones in the photosynthetic chain and possibly in a chloroplast respiratory chain. The immediate electron acceptor for the enzyme in this species is believed to be plastoquinone. Couples the redox reaction to proton translocation, and thus conserves the redox energy in a proton gradient. This Phaseolus vulgaris (Kidney bean) protein is NAD(P)H-quinone oxidoreductase subunit 6, chloroplastic (ndhG).